Consider the following 318-residue polypeptide: NADH-ubiquinone oxidoreductase chain 1 (318 aa).

8 consecutive transmembrane segments (helical) span residues 2–22 (FMINVLTLIIPILLAVAFLTL), 68–88 (ISMFILAPILALTLALTMWIP), 100–120 (LGVLFMLAMSSLAVYSILWSG), 147–167 (AIILLSVLLMNGSFTLSTLII), 172–192 (VWLIFPAWPLAMMWFISTLAE), 217–237 (AGPFALFFMAEYANIIMMNIF), 253–273 (ELYTINFTIKSLLLSITFLWI), and 294–314 (LPLTLALCMWHVSLPILLSSI).

The protein belongs to the complex I subunit 1 family.

The protein resides in the mitochondrion inner membrane. It carries out the reaction a ubiquinone + NADH + 5 H(+)(in) = a ubiquinol + NAD(+) + 4 H(+)(out). Functionally, core subunit of the mitochondrial membrane respiratory chain NADH dehydrogenase (Complex I) that is believed to belong to the minimal assembly required for catalysis. Complex I functions in the transfer of electrons from NADH to the respiratory chain. The immediate electron acceptor for the enzyme is believed to be ubiquinone. In Ovis aries (Sheep), this protein is NADH-ubiquinone oxidoreductase chain 1 (MT-ND1).